Reading from the N-terminus, the 502-residue chain is MSDLLDDPTPGQNAPEFSVSEISGEVKRTLEGTFGRIRVRGEVGRVFKARSGHLYYDIKDDRSVLACTTWKGQISGLSVVPEEGLEVVVTGRLTAFGGQSKYNMNVDEVAVAGQGALMALLEKRKAQLAAEGLFAPERKKPLPYLPGIIGVITSPSGAVIRDILHRLRDRFPRKVLVWPVAVQGSNSAPEVARAIDGFNALTPGGALPRPDLIIVARGGGSIEDLWGFNEEIVARATAASDIPLISAVGHETDTTLIDYVSDLRAPTPTAAAEHAVPVRLELLGWVENQGARMANAASRAVQLRRQRLGDMARALPRPDTLLETPRQRLDRVSDRLPNALISGVQRRKLTLSDRAASLRPATLRGLVSSRQDKLKNLSSRLTLRPITQDLGRKRDALDRITKRLNTAQSSRIDRQIDRLSATARQLDILSYKATLRRGYAVVRDGAALVTSTEGARKAAELSIEFADGTFDVASAPSTTKKSAPKPAAPKAPKTPGEQGSLF.

Residues serine 474–proline 495 are compositionally biased toward low complexity. Positions serine 474 to phenylalanine 502 are disordered.

Belongs to the XseA family. As to quaternary structure, heterooligomer composed of large and small subunits.

It localises to the cytoplasm. The catalysed reaction is Exonucleolytic cleavage in either 5'- to 3'- or 3'- to 5'-direction to yield nucleoside 5'-phosphates.. In terms of biological role, bidirectionally degrades single-stranded DNA into large acid-insoluble oligonucleotides, which are then degraded further into small acid-soluble oligonucleotides. The sequence is that of Exodeoxyribonuclease 7 large subunit from Ruegeria sp. (strain TM1040) (Silicibacter sp.).